We begin with the raw amino-acid sequence, 932 residues long: DNA mismatch repair protein MutS (932 aa).

Over residues 1 to 13 (MTTDTDTDVDAGT) the composition is skewed to acidic residues. A disordered region spans residues 1–26 (MTTDTDTDVDAGTDLEPQPEGPPEKM). Position 648 to 655 (648 to 655 (GPNMSGKS)) interacts with ATP. The disordered stretch occupies residues 865–892 (NQQNQASDDDEIARSPRGADTNTDAGIN).

It belongs to the DNA mismatch repair MutS family.

This protein is involved in the repair of mismatches in DNA. It is possible that it carries out the mismatch recognition step. This protein has a weak ATPase activity. This is DNA mismatch repair protein MutS from Haloquadratum walsbyi (strain DSM 16790 / HBSQ001).